Consider the following 1268-residue polypeptide: uncharacterized protein (1268 aa).

Residues 191 to 206 (KIVSVKPSKSSQQVDV) show a composition bias toward low complexity. Disordered regions lie at residues 191-235 (KIVS…SKKK) and 253-273 (NCRS…SKGC). The span at 223-235 (RKPEKSSQDSKKK) shows a compositional bias: basic and acidic residues. The CCHC-type zinc finger occupies 239–256 (PTCFYCNKKGHYATNCRS). Residues 465–644 (EMGVIVPITY…KQVTFLGFVD (180 aa)) form the Reverse transcriptase domain. The 154-residue stretch at 844 to 997 (VPEAPWKRIH…TPAECHFGRK (154 aa)) folds into the Integrase catalytic domain. The disordered stretch occupies residues 1092-1268 (GDYSRSSVNP…RRERVRTTWR (177 aa)). Composition is skewed to polar residues over residues 1127-1143 (VTSN…SRIT) and 1160-1169 (GSCSPTNNDV). A compositionally biased stretch (low complexity) spans 1208-1221 (PSTSTGTPRGSTST). The span at 1222 to 1249 (QLGQASTRNGSRYTASGRNPSCQGNRYS) shows a compositional bias: polar residues. Residues 1257–1268 (TARRERVRTTWR) are compositionally biased toward basic and acidic residues.

This is an uncharacterized protein from Caenorhabditis elegans.